We begin with the raw amino-acid sequence, 1133 residues long: Envelopment polyprotein (1133 aa).

An N-terminal signal peptide occupies residues 1–16; the sequence is MWSLLLLAALVGQGFA. Residues 17–484 are Lumenal-facing; sequence LKNVFDMRIQ…PGFHGWATAA (468 aa). Disulfide bonds link Cys-61–Cys-155, Cys-107–Cys-126, Cys-131–Cys-136, Cys-173–Cys-183, Cys-208–Cys-245, Cys-232–Cys-349, Cys-374–Cys-433, Cys-378–Cys-387, Cys-403–Cys-422, and Cys-450–Cys-473. Asn-132 is a glycosylation site (N-linked (GlcNAc...) asparagine; by host). Asn-233 and Asn-345 each carry an N-linked (GlcNAc...) asparagine; by host glycan. A glycan (N-linked (GlcNAc...) asparagine; by host) is linked at Asn-397. Residues 485 to 504 traverse the membrane as a helical segment; sequence LLITFCFGWVLIPACTLAIL. The Cytoplasmic segment spans residues 505-626; sequence LVLKFFANIL…NLFRYKSRCY (122 aa). The interval 514-531 is binding to the ribonucleoprotein; sequence LHTSNQENRFKAILRKIK. CCHC-type zinc fingers lie at residues 543 to 563 and 568 to 589; these read CEIC…NLSC and CPYC…YKVC. Binding to the ribonucleoprotein stretches follow at residues 586–603, 590–601, and 609–623; these read YKVC…KKTV, QATHRFREDLKK, and GPGC…RYKS. The ITAM domain maps to 609 to 632; that stretch reads GPGCYRTLNLFRYKSRCYILTMWT. Positions 613–616 match the YxxL motif; it reads YRTL. A helical transmembrane segment spans residues 627 to 647; it reads ILTMWTLLLIIESILWAASAA. Over 648–1105 the chain is Lumenal; sequence EIPLVPLWTD…VMGIINGNWV (458 aa). Cystine bridges form between Cys-733/Cys-768, Cys-737/Cys-775, Cys-749/Cys-883, Cys-763/Cys-894, Cys-778/Cys-902, Cys-804/Cys-813, Cys-821/Cys-830, and Cys-861/Cys-865. A fusion loop region spans residues 755–775; the sequence is YEYENSWACNPPDCPGVGTGC. N-linked (GlcNAc...) asparagine; by host glycosylation is present at Asn-926. Intrachain disulfides connect Cys-968–Cys-998, Cys-991–Cys-1043, Cys-1008–Cys-1013, Cys-1044–Cys-1049, and Cys-1083–Cys-1087. Residues 1106 to 1125 form a helical membrane-spanning segment; that stretch reads VLIVLCVLLLFSLILLSILC. Residues 1120 to 1133 form a binding to the ribonucleoprotein region; it reads LLSILCPVRKHKKS. Residues 1126 to 1133 lie on the Cytoplasmic side of the membrane; sequence PVRKHKKS.

Belongs to the hantavirus envelope glycoprotein family. As to quaternary structure, homodimer. Homotetramer; forms heterotetrameric Gn-Gc spikes in the pre-fusion conformation. Interacts (via C-terminus) with the nucleoprotein. Interacts with host TUFM; this interaction contributes to the virus-induced degradation of mitochondria by autophagy, which leads to degradation of host MAVS and inhibition of type I interferon (IFN) responses. Interacts with host MAP1LC3B; this interaction contributes to the virus-induced degradation of mitochondria by autophagy, which leads to degradation of host MAVS and inhibition of type I interferon (IFN) responses. Homodimer. Homotetramer; forms heterotetrameric Gn-Gc spikes in the pre-fusion conformation. Homotrimer; forms homotrimer in the post-fusion conformation at acidic pH. Interacts (via C-terminus) with the nucleoprotein. Post-translationally, envelope polyprotein precursor is quickly cleaved in vivo just after synthesis, presumably by host signal peptidase.

It is found in the virion membrane. Its subcellular location is the host cell surface. It localises to the host Golgi apparatus membrane. The protein resides in the host endoplasmic reticulum membrane. The protein localises to the host mitochondrion. Forms homotetramers with glycoprotein C at the surface of the virion. Attaches the virion to host cell receptors including integrin ITGAV/ITGB3. This attachment induces virion internalization predominantly through clathrin-dependent endocytosis. Mediates the assembly and budding of infectious virus particles through its interaction with the nucleocapsid protein and the viral genome. May dysregulate normal immune and endothelial cell responses through an ITAM motif. Translocates to mitochondria, binds to host TUFM and recruits MAP1LC3B. These interactions induce mitochondrial autophagy and therefore destruction of host MAVS leading to inhibition of type I interferon (IFN) responses. Concomitant breakdown of glycoprotein N is apparently prevented by the nucleoprotein that may inhibit Gn-stimulated autophagosome-lysosome fusion. Interacts with the viral genomic RNA. In terms of biological role, forms homotetramers with glycoprotein N at the surface of the virion. Attaches the virion to host cell receptors including integrin ITGAV/ITGB3. This attachment induces virion internalization predominantly through clathrin-dependent endocytosis. Class II fusion protein that promotes fusion of viral membrane with host endosomal membrane after endocytosis of the virion. The polypeptide is Envelopment polyprotein (GP) (Homo sapiens (Human)).